We begin with the raw amino-acid sequence, 340 residues long: Putative methionyl-tRNA formyltransferase (340 aa).

It belongs to the Fmt family.

It localises to the mitochondrion. The protein resides in the mitochondrion matrix. Its subcellular location is the cytoplasm. It catalyses the reaction L-methionyl-tRNA(fMet) + (6R)-10-formyltetrahydrofolate = N-formyl-L-methionyl-tRNA(fMet) + (6S)-5,6,7,8-tetrahydrofolate + H(+). Functionally, formylates methionyl-tRNA in mitochondria and the cytoplasm. Responsible for the formylation of the N-terminally formylated (Nt-formylated) mitochondrial matrix proteins that are encoded by mitochondrial DNA. Nt-formylated proteins in the cytoplasm are strongly up-regulated in stationary phase or upon starvation for specific amino acids and are targeted for degradation by an E3 ubiquitin ligase-mediated fMet/N-end rule pathway. Increased Nt-formylation of cytosolic proteins appears to be important for adaptation to these stresses. This chain is Putative methionyl-tRNA formyltransferase (fmt1), found in Schizosaccharomyces pombe (strain 972 / ATCC 24843) (Fission yeast).